We begin with the raw amino-acid sequence, 457 residues long: GTPase Der (457 aa).

EngA-type G domains are found at residues 4–169 (PTIA…PENN) and 177–352 (IMMS…NQHR). Residues 10 to 17 (GRPNVGKS), 57 to 61 (DTGGL), 120 to 123 (NKCE), 183 to 190 (GRPNVGKS), 230 to 234 (DTAGI), and 295 to 298 (NKWD) contribute to the GTP site. Residues 353 to 438 (RRVTTSVVNE…PLILLWRGKQ (86 aa)) enclose the KH-like domain.

This sequence belongs to the TRAFAC class TrmE-Era-EngA-EngB-Septin-like GTPase superfamily. EngA (Der) GTPase family. In terms of assembly, associates with the 50S ribosomal subunit.

In terms of biological role, GTPase that plays an essential role in the late steps of ribosome biogenesis. The polypeptide is GTPase Der (Prochlorococcus marinus (strain AS9601)).